A 225-amino-acid polypeptide reads, in one-letter code: Protein ZW2 (225 aa).

The 219-residue stretch at 7–225 (SETFASFFND…FYLRLRDLGV (219 aa)) folds into the DOG1 domain.

Its function is as follows. May be involved in the regulation of abscisic acid (ABA) sensitivity. The protein is Protein ZW2 of Arabidopsis thaliana (Mouse-ear cress).